A 351-amino-acid chain; its full sequence is UDP-3-O-acylglucosamine N-acyltransferase (351 aa).

H240 serves as the catalytic Proton acceptor.

Belongs to the transferase hexapeptide repeat family. LpxD subfamily. As to quaternary structure, homotrimer.

It catalyses the reaction a UDP-3-O-[(3R)-3-hydroxyacyl]-alpha-D-glucosamine + a (3R)-hydroxyacyl-[ACP] = a UDP-2-N,3-O-bis[(3R)-3-hydroxyacyl]-alpha-D-glucosamine + holo-[ACP] + H(+). It functions in the pathway bacterial outer membrane biogenesis; LPS lipid A biosynthesis. Its function is as follows. Catalyzes the N-acylation of UDP-3-O-acylglucosamine using 3-hydroxyacyl-ACP as the acyl donor. Is involved in the biosynthesis of lipid A, a phosphorylated glycolipid that anchors the lipopolysaccharide to the outer membrane of the cell. The chain is UDP-3-O-acylglucosamine N-acyltransferase from Pseudomonas syringae pv. tomato (strain ATCC BAA-871 / DC3000).